A 528-amino-acid polypeptide reads, in one-letter code: Apolipoprotein N-acyltransferase (528 aa).

A run of 5 helical transmembrane segments spans residues 8–28 (IMLL…AVGA), 69–89 (AFWI…WWLG), 99–119 (FAWA…VFYG), 178–198 (VLGL…PALL), and 203–223 (GAKL…GYGA). A CN hydrolase domain is found at 241 to 490 (VQPNIDQAAK…EGVENATFTL (250 aa)). Glu-285 serves as the catalytic Proton acceptor. Residue Lys-349 is part of the active site. The active-site Nucleophile is the Cys-402.

This sequence belongs to the CN hydrolase family. Apolipoprotein N-acyltransferase subfamily.

It is found in the cell inner membrane. The catalysed reaction is N-terminal S-1,2-diacyl-sn-glyceryl-L-cysteinyl-[lipoprotein] + a glycerophospholipid = N-acyl-S-1,2-diacyl-sn-glyceryl-L-cysteinyl-[lipoprotein] + a 2-acyl-sn-glycero-3-phospholipid + H(+). It participates in protein modification; lipoprotein biosynthesis (N-acyl transfer). Its function is as follows. Catalyzes the phospholipid dependent N-acylation of the N-terminal cysteine of apolipoprotein, the last step in lipoprotein maturation. The protein is Apolipoprotein N-acyltransferase of Allorhizobium ampelinum (strain ATCC BAA-846 / DSM 112012 / S4) (Agrobacterium vitis (strain S4)).